A 389-amino-acid polypeptide reads, in one-letter code: uncharacterized protein (389 aa).

This sequence belongs to the mimivirus L17x/L18x family.

This is an uncharacterized protein from Acanthamoeba polyphaga mimivirus (APMV).